A 400-amino-acid chain; its full sequence is Ribosomal RNA dihydrouridine synthase (400 aa).

Residues alanine 14, aspartate 33, asparagine 34, arginine 40, glycine 46, asparagine 51, valine 131, glutamate 367, and phenylalanine 380 each contribute to the FAD site.

The protein belongs to the BaiN/RdsA family. RdsA subfamily. FAD serves as cofactor.

The catalysed reaction is a 5,6-dihydrouridine in mRNA + NAD(+) = a uridine in mRNA + NADH + H(+). In terms of biological role, catalyzes the synthesis of 5,6-dihydrouridine (D) at position 2449 in 23S rRNA. Can use NADH as a source of reducing equivalents but not NADPH. In Escherichia coli (strain K12), this protein is Ribosomal RNA dihydrouridine synthase.